Here is a 125-residue protein sequence, read N- to C-terminus: Large ribosomal subunit protein bL12 (125 aa).

It belongs to the bacterial ribosomal protein bL12 family. In terms of assembly, homodimer. Part of the ribosomal stalk of the 50S ribosomal subunit. Forms a multimeric L10(L12)X complex, where L10 forms an elongated spine to which 2 to 4 L12 dimers bind in a sequential fashion. Binds GTP-bound translation factors.

Forms part of the ribosomal stalk which helps the ribosome interact with GTP-bound translation factors. Is thus essential for accurate translation. This chain is Large ribosomal subunit protein bL12, found in Francisella tularensis subsp. novicida (strain U112).